Here is a 75-residue protein sequence, read N- to C-terminus: Translational regulator CsrA (75 aa).

This sequence belongs to the CsrA/RsmA family. Homodimer; the beta-strands of each monomer intercalate to form a hydrophobic core, while the alpha-helices form wings that extend away from the core.

The protein localises to the cytoplasm. A translational regulator that binds mRNA to regulate translation initiation and/or mRNA stability. Usually binds in the 5'-UTR at or near the Shine-Dalgarno sequence preventing ribosome-binding, thus repressing translation. Its main target seems to be the major flagellin gene, while its function is anatagonized by FliW. The protein is Translational regulator CsrA of Treponema denticola (strain ATCC 35405 / DSM 14222 / CIP 103919 / JCM 8153 / KCTC 15104).